Consider the following 241-residue polypeptide: Protein TraL (241 aa).

The protein to plasmid R751 TraL.

The protein is Protein TraL (traL) of Escherichia coli.